We begin with the raw amino-acid sequence, 255 residues long: Tachylectin-2 (255 aa).

The N-terminal stretch at 1 to 19 (MKFLLVVLGFIGFLKDGIT) is a signal peptide. WD repeat units lie at residues 20-67 (VGGE…FLFL), 68-114 (SPGG…FLFF), 115-161 (DPNG…FLFF), 162-208 (HPNG…FLFF), and 209-255 (SSVG…FLFF).

Monomer.

The protein resides in the secreted. The protein localises to the cytoplasmic granule. Its function is as follows. Lectin that binds specifically to N-acetylglucosamine and N-acetylgalactosamine. Is part of the innate immunity host defense system of the horseshoe crab. This chain is Tachylectin-2, found in Tachypleus tridentatus (Japanese horseshoe crab).